The following is a 376-amino-acid chain: 3-dehydroquinate synthase (376 aa).

Residues 115–119 (GVIGD), 139–140 (TS), Lys-152, and Lys-161 contribute to the NAD(+) site. Glu-194, His-256, and His-275 together coordinate Zn(2+).

Belongs to the sugar phosphate cyclases superfamily. Dehydroquinate synthase family. It depends on Co(2+) as a cofactor. Requires Zn(2+) as cofactor. NAD(+) serves as cofactor.

The protein resides in the cytoplasm. The catalysed reaction is 7-phospho-2-dehydro-3-deoxy-D-arabino-heptonate = 3-dehydroquinate + phosphate. It functions in the pathway metabolic intermediate biosynthesis; chorismate biosynthesis; chorismate from D-erythrose 4-phosphate and phosphoenolpyruvate: step 2/7. Its function is as follows. Catalyzes the conversion of 3-deoxy-D-arabino-heptulosonate 7-phosphate (DAHP) to dehydroquinate (DHQ). This chain is 3-dehydroquinate synthase, found in Rhizobium leguminosarum bv. trifolii (strain WSM2304).